Here is a 281-residue protein sequence, read N- to C-terminus: NADPH-dependent 7-cyano-7-deazaguanine reductase (281 aa).

87–89 contacts substrate; it reads IES. 89–90 is a binding site for NADPH; sequence SK. Residue C188 is the Thioimide intermediate of the active site. The Proton donor role is filled by D195. 227-228 lines the substrate pocket; sequence HE. NADPH is bound at residue 256–257; sequence RG. The disordered stretch occupies residues 261–281; it reads INPYRSTEQAKPDHNHRMARQ. The span at 268-281 shows a compositional bias: basic and acidic residues; the sequence is EQAKPDHNHRMARQ.

The protein belongs to the GTP cyclohydrolase I family. QueF type 2 subfamily. As to quaternary structure, homodimer.

It localises to the cytoplasm. The enzyme catalyses 7-aminomethyl-7-carbaguanine + 2 NADP(+) = 7-cyano-7-deazaguanine + 2 NADPH + 3 H(+). It functions in the pathway tRNA modification; tRNA-queuosine biosynthesis. In terms of biological role, catalyzes the NADPH-dependent reduction of 7-cyano-7-deazaguanine (preQ0) to 7-aminomethyl-7-deazaguanine (preQ1). This is NADPH-dependent 7-cyano-7-deazaguanine reductase from Vibrio vulnificus (strain YJ016).